Reading from the N-terminus, the 263-residue chain is Neurogenin-2 (263 aa).

The segment at 20–76 (LGSASPASATLTPMSSSADEEEDEELRRPGSARGQRGAEAEQGVQGSPASGAGGCRP) is disordered. Positions 24–36 (SPASATLTPMSSS) are enriched in polar residues. The bHLH domain occupies 112-164 (TRRLKANNRERNRMHNLNAALDALREVLPTFPEDAKLTKIETLRFAHNYIWAL). Positions 197-231 (LGASGDSPSPPSSWSCTNSPASSSNSTSPYSCTLS) are enriched in low complexity. Residues 197-253 (LGASGDSPSPPSSWSCTNSPASSSNSTSPYSCTLSPASPGSDVDYWQPPPPEKHRYA) are disordered.

As to quaternary structure, efficient DNA binding requires dimerization with another bHLH protein.

It is found in the nucleus. Its function is as follows. Transcriptional regulator. Involved in neuronal differentiation. Activates transcription by binding to the E box (5'-CANNTG-3'). This Mus musculus (Mouse) protein is Neurogenin-2 (Neurog2).